A 185-amino-acid chain; its full sequence is MVSLRLQKRLAASVLKCGQKRLWLDPNESSEISMANSRASIRKLIKDGLVMKRSTVIHSRSRARAFLEAKRKGRHTGSGKRKGTRNARMPTKVLWMRRQRVLRRLLRKYRAAKKIDKHQYHEFYLGSKGNLYKNKTVLIEAIHVSKADKIKSDKLTSQQEARRAKNTASRAKRNEKAQIVAKVDV.

Positions S152–V185 are disordered.

Belongs to the eukaryotic ribosomal protein eL19 family.

This Tetrahymena thermophila (strain SB210) protein is Large ribosomal subunit protein eL19 (RPL19).